The primary structure comprises 460 residues: tRNA-2-methylthio-N(6)-dimethylallyladenosine synthase (460 aa).

Residues Gly-10–Ser-126 enclose the MTTase N-terminal domain. [4Fe-4S] cluster-binding residues include Cys-19, Cys-55, Cys-89, Cys-161, Cys-165, and Cys-168. The Radical SAM core domain occupies Arg-147–Glu-384. The region spanning Ala-387 to Pro-455 is the TRAM domain.

It belongs to the methylthiotransferase family. MiaB subfamily. Monomer. [4Fe-4S] cluster serves as cofactor.

It localises to the cytoplasm. It carries out the reaction N(6)-dimethylallyladenosine(37) in tRNA + (sulfur carrier)-SH + AH2 + 2 S-adenosyl-L-methionine = 2-methylsulfanyl-N(6)-dimethylallyladenosine(37) in tRNA + (sulfur carrier)-H + 5'-deoxyadenosine + L-methionine + A + S-adenosyl-L-homocysteine + 2 H(+). Functionally, catalyzes the methylthiolation of N6-(dimethylallyl)adenosine (i(6)A), leading to the formation of 2-methylthio-N6-(dimethylallyl)adenosine (ms(2)i(6)A) at position 37 in tRNAs that read codons beginning with uridine. The sequence is that of tRNA-2-methylthio-N(6)-dimethylallyladenosine synthase from Parasynechococcus marenigrum (strain WH8102).